A 556-amino-acid chain; its full sequence is 2-isopropylmalate synthase (556 aa).

The 275-residue stretch at 33 to 307 (PIWCSSDLRD…NPELDFSDID (275 aa)) folds into the Pyruvate carboxyltransferase domain. Residues aspartate 42, histidine 246, histidine 248, and asparagine 282 each coordinate Mg(2+). Residues 439–556 (ANTPYALISH…SLSQAQAKAA (118 aa)) form a regulatory domain region.

It belongs to the alpha-IPM synthase/homocitrate synthase family. LeuA type 2 subfamily. In terms of assembly, homodimer. Mg(2+) is required as a cofactor.

The protein localises to the cytoplasm. It carries out the reaction 3-methyl-2-oxobutanoate + acetyl-CoA + H2O = (2S)-2-isopropylmalate + CoA + H(+). Its pathway is amino-acid biosynthesis; L-leucine biosynthesis; L-leucine from 3-methyl-2-oxobutanoate: step 1/4. Catalyzes the condensation of the acetyl group of acetyl-CoA with 3-methyl-2-oxobutanoate (2-ketoisovalerate) to form 3-carboxy-3-hydroxy-4-methylpentanoate (2-isopropylmalate). The protein is 2-isopropylmalate synthase of Pseudomonas syringae pv. tomato (strain ATCC BAA-871 / DC3000).